Here is a 361-residue protein sequence, read N- to C-terminus: MGQTRIPCLLMRGGTSKGAYFLHDDLPAPGPLRDRVLLAVMGSPDARQIDGIGGADSLTSKVAIIRASQRDDADVDYLFAQVVVDEARVDYGQNCGNILAGVGPFALERGLVAASGASTPVRIFMENTGQIAVAQVPTADGQVEYAGDTRIDGVPGRAAALVVTFADVAGASCGALLPTGNSRDCVEGVEVTCIDNGMPVVLLCAEDLGVTGYEPCETLEADSALKTRLEAIRLQLGPRMNLGDVSQRNVPKMCLLSAPRNGGTVNTRSFIPHRCHASIGVFGAVSVATACLIEGSVAQGLASTSGGDRQRLAVEHPSGEFTVEISLEHGVIKGCGLVRTARLLFDGVVCIGRDTWGGPEK.

This sequence belongs to the PrpF family.

It carries out the reaction (1E)-4-oxobut-1-ene-1,2,4-tricarboxylate = 4-carboxy-2-hydroxy-cis,cis-muconate. Its function is as follows. Catalyzes the tautomerization of the 4-oxalomesaconic acid keto (OMAketo) generated by GalA dioxygenase to 4-oxalomesaconic acid enol (OMAenol). Mediates the second step in gallate degradation pathway. The polypeptide is 4-oxalomesaconate tautomerase (galD) (Pseudomonas putida (strain ATCC 47054 / DSM 6125 / CFBP 8728 / NCIMB 11950 / KT2440)).